The following is an 85-amino-acid chain: F1845 adhesin operon regulatory protein (85 aa).

In terms of biological role, regulates the transcription of genes involved in the biosynthesis of F1845 fimbrial adhesin. This chain is F1845 adhesin operon regulatory protein (daaA), found in Escherichia coli.